The sequence spans 718 residues: Probable glycerol-3-phosphate acyltransferase, mitochondrial (718 aa).

Residues 167 to 172 (HRSHLD) carry the HXXXXD motif motif. A helical transmembrane segment spans residues 409 to 425 (MMCSISPVAVVSCLLLA).

It belongs to the GPAT/DAPAT family.

It localises to the mitochondrion membrane. It carries out the reaction sn-glycerol 3-phosphate + an acyl-CoA = a 1-acyl-sn-glycero-3-phosphate + CoA. The protein operates within phospholipid metabolism; CDP-diacylglycerol biosynthesis; CDP-diacylglycerol from sn-glycerol 3-phosphate: step 1/3. The sequence is that of Probable glycerol-3-phosphate acyltransferase, mitochondrial (acl-6) from Caenorhabditis elegans.